We begin with the raw amino-acid sequence, 898 residues long: Endoplasmic reticulum metallopeptidase 1 (898 aa).

N-acetylmethionine is present on methionine 1. The disordered stretch occupies residues methionine 1–serine 55. Residues methionine 1–arginine 66 are Cytoplasmic-facing. Residues arginine 29–glycine 41 show a composition bias toward basic and acidic residues. Residues threonine 67 to glutamine 87 form a helical membrane-spanning segment. At arginine 88–methionine 393 the chain is on the lumenal side. Asparagine 176 carries an N-linked (GlcNAc...) asparagine glycan. A disulfide bridge links cysteine 198 with cysteine 216. 2 residues coordinate Zn(2+): histidine 199 and aspartate 211. Glutamate 245 acts as the Proton acceptor in catalysis. Zn(2+)-binding residues include glutamate 246, glutamate 272, and histidine 348. A helical membrane pass occupies residues valine 394–isoleucine 414. The Cytoplasmic portion of the chain corresponds to asparagine 415 to threonine 451. A helical membrane pass occupies residues phenylalanine 452–isoleucine 472. The Lumenal segment spans residues glycine 473 to asparagine 480. Residues tyrosine 481–histidine 501 traverse the membrane as a helical segment. Residues threonine 502–leucine 515 are Cytoplasmic-facing. The helical transmembrane segment at tyrosine 516–tyrosine 538 threads the bilayer. At glutamine 539–cysteine 542 the chain is on the lumenal side. The chain crosses the membrane as a helical span at residues serine 543 to tyrosine 562. Residues lysine 563–arginine 573 lie on the Cytoplasmic side of the membrane. The helical transmembrane segment at phenylalanine 574–tryptophan 594 threads the bilayer. Residues alanine 595–valine 615 are Lumenal-facing. A helical transmembrane segment spans residues valine 616 to isoleucine 636. Residues tyrosine 637–threonine 645 are Cytoplasmic-facing. A helical membrane pass occupies residues isoleucine 646–phenylalanine 666. At proline 667–phenylalanine 898 the chain is on the lumenal side. A glycan (N-linked (GlcNAc...) asparagine) is linked at asparagine 724.

The protein belongs to the peptidase M28 family. Requires Zn(2+) as cofactor.

It is found in the endoplasmic reticulum membrane. Within the ovary, required for the organization of somatic cells and oocytes into discrete follicular structures. The chain is Endoplasmic reticulum metallopeptidase 1 from Mus musculus (Mouse).